A 164-amino-acid chain; its full sequence is NADH-quinone oxidoreductase subunit I 2 (164 aa).

2 consecutive 4Fe-4S ferredoxin-type domains span residues 39-71 (IVLTRDPDGQERCVACNLCAAACPVDCIDVVKA) and 81-110 (ESFRINFARCIFCGYCEEACPTSAIQLTPD). [4Fe-4S] cluster contacts are provided by cysteine 51, cysteine 54, cysteine 57, cysteine 61, cysteine 90, cysteine 93, cysteine 96, and cysteine 100.

The protein belongs to the complex I 23 kDa subunit family. NDH-1 is composed of 14 different subunits. Subunits NuoA, H, J, K, L, M, N constitute the membrane sector of the complex. It depends on [4Fe-4S] cluster as a cofactor.

It localises to the cell inner membrane. The catalysed reaction is a quinone + NADH + 5 H(+)(in) = a quinol + NAD(+) + 4 H(+)(out). In terms of biological role, NDH-1 shuttles electrons from NADH, via FMN and iron-sulfur (Fe-S) centers, to quinones in the respiratory chain. The immediate electron acceptor for the enzyme in this species is believed to be ubiquinone. Couples the redox reaction to proton translocation (for every two electrons transferred, four hydrogen ions are translocated across the cytoplasmic membrane), and thus conserves the redox energy in a proton gradient. The polypeptide is NADH-quinone oxidoreductase subunit I 2 (Cereibacter sphaeroides (strain ATCC 17023 / DSM 158 / JCM 6121 / CCUG 31486 / LMG 2827 / NBRC 12203 / NCIMB 8253 / ATH 2.4.1.) (Rhodobacter sphaeroides)).